Consider the following 603-residue polypeptide: Elongation factor 4 (603 aa).

The region spanning 7 to 189 (VRIRNFCIIA…AVVERVPPPP (183 aa)) is the tr-type G domain. GTP-binding positions include 19–24 (DHGKST) and 136–139 (NKID).

Belongs to the TRAFAC class translation factor GTPase superfamily. Classic translation factor GTPase family. LepA subfamily.

Its subcellular location is the cell inner membrane. The catalysed reaction is GTP + H2O = GDP + phosphate + H(+). Functionally, required for accurate and efficient protein synthesis under certain stress conditions. May act as a fidelity factor of the translation reaction, by catalyzing a one-codon backward translocation of tRNAs on improperly translocated ribosomes. Back-translocation proceeds from a post-translocation (POST) complex to a pre-translocation (PRE) complex, thus giving elongation factor G a second chance to translocate the tRNAs correctly. Binds to ribosomes in a GTP-dependent manner. This chain is Elongation factor 4, found in Nostoc sp. (strain PCC 7120 / SAG 25.82 / UTEX 2576).